The sequence spans 389 residues: PqqA peptide cyclase (389 aa).

A Radical SAM core domain is found at 19-235 (VGLPLWLLAE…NEYRVRLEAE (217 aa)). [4Fe-4S] cluster is bound by residues Cys33, Cys37, and Cys40.

Belongs to the radical SAM superfamily. PqqE family. In terms of assembly, interacts with PqqD. The interaction is necessary for activity of PqqE. It depends on [4Fe-4S] cluster as a cofactor.

The catalysed reaction is [PQQ precursor protein] + S-adenosyl-L-methionine = E-Y cross-linked-[PQQ precursor protein] + 5'-deoxyadenosine + L-methionine + H(+). Its pathway is cofactor biosynthesis; pyrroloquinoline quinone biosynthesis. Functionally, catalyzes the cross-linking of a glutamate residue and a tyrosine residue in the PqqA protein as part of the biosynthesis of pyrroloquinoline quinone (PQQ). In Pseudomonas savastanoi pv. phaseolicola (strain 1448A / Race 6) (Pseudomonas syringae pv. phaseolicola (strain 1448A / Race 6)), this protein is PqqA peptide cyclase.